A 356-amino-acid polypeptide reads, in one-letter code: Peptide chain release factor 1 (356 aa).

Position 234 is an N5-methylglutamine (Gln-234).

It belongs to the prokaryotic/mitochondrial release factor family. In terms of processing, methylated by PrmC. Methylation increases the termination efficiency of RF1.

It is found in the cytoplasm. In terms of biological role, peptide chain release factor 1 directs the termination of translation in response to the peptide chain termination codons UAG and UAA. This chain is Peptide chain release factor 1, found in Parafrankia sp. (strain EAN1pec).